The chain runs to 387 residues: 3-ketoacyl-CoA thiolase (387 aa).

Residue Cys91 is the Acyl-thioester intermediate of the active site. Catalysis depends on proton acceptor residues His343 and Cys373.

The protein belongs to the thiolase-like superfamily. Thiolase family. Heterotetramer of two alpha chains (FadB) and two beta chains (FadA).

Its subcellular location is the cytoplasm. It carries out the reaction an acyl-CoA + acetyl-CoA = a 3-oxoacyl-CoA + CoA. It participates in lipid metabolism; fatty acid beta-oxidation. Functionally, catalyzes the final step of fatty acid oxidation in which acetyl-CoA is released and the CoA ester of a fatty acid two carbons shorter is formed. The protein is 3-ketoacyl-CoA thiolase of Vibrio vulnificus (strain YJ016).